The chain runs to 72 residues: Cytochrome c oxidase subunit 8C, mitochondrial (72 aa).

Residues 1-29 (MSRLLQFCSSLLRHRVVLFSKPGHSGRLS) constitute a mitochondrion transit peptide. At 30–40 (HSESPQNQVLT) the chain is on the mitochondrial matrix side. Residues 41-64 (PTESVVGIVVFFATFFIPAAYVMS) form a helical membrane-spanning segment. Over 65–72 (NLKFFKGE) the chain is Mitochondrial intermembrane.

This sequence belongs to the cytochrome c oxidase VIII family. As to quaternary structure, component of the cytochrome c oxidase (complex IV, CIV), a multisubunit enzyme composed of 14 subunits. The complex is composed of a catalytic core of 3 subunits MT-CO1, MT-CO2 and MT-CO3, encoded in the mitochondrial DNA, and 11 supernumerary subunits COX4I, COX5A, COX5B, COX6A, COX6B, COX6C, COX7A, COX7B, COX7C, COX8 and NDUFA4, which are encoded in the nuclear genome. The complex exists as a monomer or a dimer and forms supercomplexes (SCs) in the inner mitochondrial membrane with NADH-ubiquinone oxidoreductase (complex I, CI) and ubiquinol-cytochrome c oxidoreductase (cytochrome b-c1 complex, complex III, CIII), resulting in different assemblies (supercomplex SCI(1)III(2)IV(1) and megacomplex MCI(2)III(2)IV(2)).

The protein localises to the mitochondrion inner membrane. The protein operates within energy metabolism; oxidative phosphorylation. Its function is as follows. Component of the cytochrome c oxidase, the last enzyme in the mitochondrial electron transport chain which drives oxidative phosphorylation. The respiratory chain contains 3 multisubunit complexes succinate dehydrogenase (complex II, CII), ubiquinol-cytochrome c oxidoreductase (cytochrome b-c1 complex, complex III, CIII) and cytochrome c oxidase (complex IV, CIV), that cooperate to transfer electrons derived from NADH and succinate to molecular oxygen, creating an electrochemical gradient over the inner membrane that drives transmembrane transport and the ATP synthase. Cytochrome c oxidase is the component of the respiratory chain that catalyzes the reduction of oxygen to water. Electrons originating from reduced cytochrome c in the intermembrane space (IMS) are transferred via the dinuclear copper A center (CU(A)) of subunit 2 and heme A of subunit 1 to the active site in subunit 1, a binuclear center (BNC) formed by heme A3 and copper B (CU(B)). The BNC reduces molecular oxygen to 2 water molecules using 4 electrons from cytochrome c in the IMS and 4 protons from the mitochondrial matrix. The sequence is that of Cytochrome c oxidase subunit 8C, mitochondrial (Cox8c) from Rattus norvegicus (Rat).